We begin with the raw amino-acid sequence, 759 residues long: uncharacterized protein (759 aa).

Disordered regions lie at residues 269–328 (SQRV…GEEP) and 406–759 (LPLR…AQTA). Positions 289–299 (AGGKEEAERGG) are enriched in basic and acidic residues. Positions 406–415 (LPLRPPSGSG) are enriched in low complexity. Residues 417-430 (AARKPGYEKEEGRG) are compositionally biased toward basic and acidic residues. Over residues 431 to 444 (RATTASATAATSPR) the composition is skewed to low complexity. 2 stretches are compositionally biased toward basic and acidic residues: residues 469–518 (PESE…RGEH) and 525–545 (DSGR…EKGT). Pro residues predominate over residues 585-599 (WVPPPHLLFPSPLPS). A compositionally biased stretch (low complexity) spans 659–680 (SLSSLSSSSSSSSSSSPSYSPS). The span at 681–690 (PLSPPSPVSP) shows a compositional bias: pro residues. 2 stretches are compositionally biased toward low complexity: residues 691 to 704 (SSPR…IRSP) and 728 to 746 (PPFS…PSAP).

This is an uncharacterized protein from Human herpesvirus 6B (strain Z29) (HHV-6 variant B).